The following is a 281-amino-acid chain: N-acetylmuramic acid 6-phosphate etherase (281 aa).

Residues 63-226 (IVPRMKQGGR…TTSVMIQLGR (164 aa)) enclose the SIS domain. The active-site Proton donor is the glutamate 91. The active site involves glutamate 122.

This sequence belongs to the GCKR-like family. MurNAc-6-P etherase subfamily. As to quaternary structure, homodimer.

It catalyses the reaction N-acetyl-D-muramate 6-phosphate + H2O = N-acetyl-D-glucosamine 6-phosphate + (R)-lactate. Its pathway is amino-sugar metabolism; N-acetylmuramate degradation. Functionally, specifically catalyzes the cleavage of the D-lactyl ether substituent of MurNAc 6-phosphate, producing GlcNAc 6-phosphate and D-lactate. This chain is N-acetylmuramic acid 6-phosphate etherase, found in Bacteroides fragilis (strain YCH46).